The following is a 155-amino-acid chain: Small ribosomal subunit protein uS7cz/uS7cy (155 aa).

The protein belongs to the universal ribosomal protein uS7 family. As to quaternary structure, part of the 30S ribosomal subunit.

The protein resides in the plastid. In terms of biological role, one of the primary rRNA binding proteins, it binds directly to 16S rRNA where it nucleates assembly of the head domain of the 30S subunit. This Epifagus virginiana (Beechdrops) protein is Small ribosomal subunit protein uS7cz/uS7cy (rps7-A).